The following is a 354-amino-acid chain: Uroporphyrinogen decarboxylase (354 aa).

Substrate-binding positions include 27-31, Asp77, Tyr154, Thr209, and His327; that span reads RQAGR.

This sequence belongs to the uroporphyrinogen decarboxylase family. Homodimer.

It is found in the cytoplasm. It carries out the reaction uroporphyrinogen III + 4 H(+) = coproporphyrinogen III + 4 CO2. Its pathway is porphyrin-containing compound metabolism; protoporphyrin-IX biosynthesis; coproporphyrinogen-III from 5-aminolevulinate: step 4/4. Catalyzes the decarboxylation of four acetate groups of uroporphyrinogen-III to yield coproporphyrinogen-III. The protein is Uroporphyrinogen decarboxylase of Pseudomonas putida (strain W619).